A 485-amino-acid chain; its full sequence is P2X purinoceptor 2 (485 aa).

Topologically, residues 1–43 are cytoplasmic; that stretch reads MAAAQPRLPAGAAMVRRLARGCWSAFWDYETPKVIVVRNRRLG. 6 disulfide bridges follow: C22–C443, C126–C177, C137–C160, C143–C171, C227–C237, and C271–C280. Residues 44–64 form a helical membrane-spanning segment; that stretch reads FVHRMVQLLILLYFVWYVFIV. The Extracellular portion of the chain corresponds to 65-339; that stretch reads QKSYQDSETG…IVHGQAGKFS (275 aa). ATP-binding residues include K82 and K84. N-linked (GlcNAc...) asparagine glycosylation is present at N195. T197 provides a ligand contact to ATP. N252 is a glycosylation site (N-linked (GlcNAc...) asparagine). The ATP site is built by S297, N301, and R303. The N-linked (GlcNAc...) asparagine glycan is linked to N311. An ATP-binding site is contributed by K321. The segment at 322–335 is pore-forming motif; the sequence is AYGIRIDVIVHGQA. The helical transmembrane segment at 340–360 threads the bilayer; it reads LIPTIINLATALTSIGVGSFL. The Cytoplasmic portion of the chain corresponds to 361-485; sequence CDWILLTFMN…STDPKGLAQL (125 aa). The tract at residues 406–485 is disordered; sequence PPPSHYSQDQ…STDPKGLAQL (80 aa). Residues 420–436 are compositionally biased toward low complexity; that stretch reads PSGEGPALGEGAELPLA. The span at 469–478 shows a compositional bias: polar residues; that stretch reads PSQQDSTSTD.

Belongs to the P2X receptor family. As to quaternary structure, homotrimer and heterotrimer; functional P2XRs are organized as homomeric and heteromeric trimers. Homotrimer. Forms heterotrimer with P2XR1. Forms heterotrimer with P2XR3. Forms heterotrimer with P2XR6.

The protein localises to the cell membrane. It catalyses the reaction Ca(2+)(in) = Ca(2+)(out). The enzyme catalyses K(+)(in) = K(+)(out). The catalysed reaction is Na(+)(in) = Na(+)(out). Fast activation by external ATP. Exhibits slow desensitization during prolonged ATP activation. Not sensitive to the ATP agonist:alpha/beta-methylene-ATP. Functionally, ATP-gated nonselective transmembrane cation channel permeable to potassium, sodium and calcium. Activation by extracellular ATP induces a variety of cellular responses, such as excitatory postsynaptic responses in sensory neurons, neuromuscular junctions (NMJ) formation, hearing, perception of taste and peristalsis. In the inner ear, regulates sound transduction and auditory neurotransmission, outer hair cell electromotility, inner ear gap junctions, and K(+) recycling. Mediates synaptic transmission between neurons and from neurons to smooth muscle. This chain is P2X purinoceptor 2 (P2rx2), found in Mus musculus (Mouse).